An 843-amino-acid polypeptide reads, in one-letter code: Pentatricopeptide repeat-containing protein At4g21880, mitochondrial (843 aa).

PPR repeat units follow at residues 392-426 (SSTS…GLVI), 427-461 (SANI…SVKP), 462-496 (NSET…NLAP), 497-531 (NSSM…DVKP), 532-562 (DSVT…AGVE), 564-594 (NKHV…LEVP), and 598-632 (HNEL…RCPV).

It belongs to the PPR family. P subfamily.

The protein resides in the mitochondrion. The protein is Pentatricopeptide repeat-containing protein At4g21880, mitochondrial of Arabidopsis thaliana (Mouse-ear cress).